The sequence spans 360 residues: Zinc finger protein ztf-2 (360 aa).

Residues 19–41 form a disordered region; the sequence is LSSPEKEHRRKRRRGEVANPSNT. 3 consecutive C2H2-type zinc fingers follow at residues 87–109, 115–138, and 180–203; these read RTCSTCGYQGKWVSEMIRHKRVH, FKCRYCSRTSKWKADLIRHVAKTH, and YRCQLCSFEDERVSVLNSHVSHLH. The span at 248–260 shows a compositional bias: low complexity; it reads PLSPCRSESSSDS. The disordered stretch occupies residues 248–272; sequence PLSPCRSESSSDSGIQTDPEEEASI.

In terms of tissue distribution, expressed in pharyngeal epithelium/arcade, which connects the pharynx to the mouth.

In terms of biological role, transcription factor. Represses gene expression, probably via binding to DNA consensus sequence 5'-[AT][CT]TTCC[AC][AG]-3' in promoter regions. May play a role in pharynx morphogenesis. The protein is Zinc finger protein ztf-2 of Caenorhabditis elegans.